The chain runs to 311 residues: Malate dehydrogenase (311 aa).

NAD(+) contacts are provided by residues 7–13 (GAAGGIG) and Asp34. Substrate-binding residues include Arg81 and Arg87. NAD(+) contacts are provided by residues Asn94 and 117–119 (ITN). Substrate-binding residues include Asn119 and Arg153. The active-site Proton acceptor is His177. An NAD(+)-binding site is contributed by Met227.

Belongs to the LDH/MDH superfamily. MDH type 1 family. In terms of assembly, homodimer.

The enzyme catalyses (S)-malate + NAD(+) = oxaloacetate + NADH + H(+). In terms of biological role, catalyzes the reversible oxidation of malate to oxaloacetate. This Shewanella pealeana (strain ATCC 700345 / ANG-SQ1) protein is Malate dehydrogenase.